A 699-amino-acid chain; its full sequence is Elongation factor G (699 aa).

A tr-type G domain is found at 8 to 283; that stretch reads EHIRNIGICA…AVVDFLPSPI (276 aa). GTP is bound by residues 17–24, 81–85, and 135–138; these read AHIDAGKT, DTPGH, and NKMD.

Belongs to the TRAFAC class translation factor GTPase superfamily. Classic translation factor GTPase family. EF-G/EF-2 subfamily.

The protein resides in the cytoplasm. Functionally, catalyzes the GTP-dependent ribosomal translocation step during translation elongation. During this step, the ribosome changes from the pre-translocational (PRE) to the post-translocational (POST) state as the newly formed A-site-bound peptidyl-tRNA and P-site-bound deacylated tRNA move to the P and E sites, respectively. Catalyzes the coordinated movement of the two tRNA molecules, the mRNA and conformational changes in the ribosome. The polypeptide is Elongation factor G (Rickettsia africae (strain ESF-5)).